The following is a 1372-amino-acid chain: Paired amphipathic helix protein Sin3-like 1 (1372 aa).

Positions 1–50 (MKRIRDDVYASGSQFRRPLGSSRGQLCGQSPVHGSGDTEEEEEGGSRRVS) are disordered. PAH domains follow at residues 51-121 (QKLT…LPKG) and 136-206 (KTVE…LPAS). Over residues 210–222 (HSAAQHSRSQAQQ) the composition is skewed to low complexity. 2 disordered regions span residues 210 to 244 (HSAA…ERRR) and 272 to 323 (REQR…SGSA). Residues 272–315 (REQRKRLDKENRARRGRDLDDREAGQDNLHHFPEKRKSSRRAEA) show a composition bias toward basic and acidic residues. Residues 331–400 (LKSMYKQAFV…DEFNQFFERC (70 aa)) form the PAH 3 domain. Disordered regions lie at residues 764–783 (DVNH…GGDT), 791–817 (LKSA…NKDS), and 934–1056 (GLRS…AEGM). The segment covering 938–957 (DSSKGTRNSDDPEGPSRNEK) has biased composition (basic and acidic residues). Composition is skewed to acidic residues over residues 990–1013 (AEAE…DSEN) and 1028–1042 (SQDE…EHDE). S1049 carries the phosphoserine modification.

As to quaternary structure, interacts (via PAH3) with ALY2. Interacts (via PAH2) with TBP1. Interacts with ALY3, GATA21, TRP2, TKI1, VAL1, SKP1B, FBX5 and PUB14.

The protein localises to the nucleus. Functionally, acts as a transcriptional repressor. A histone deacetylase (HDAC) activity is required for transcription repression. May play a role in telomere stability. This is Paired amphipathic helix protein Sin3-like 1 (SNL1) from Arabidopsis thaliana (Mouse-ear cress).